We begin with the raw amino-acid sequence, 215 residues long: Pyrrolidone-carboxylate peptidase (215 aa).

Catalysis depends on residues Glu81, Cys144, and His168.

The protein belongs to the peptidase C15 family. As to quaternary structure, homotetramer.

It is found in the cytoplasm. The catalysed reaction is Release of an N-terminal pyroglutamyl group from a polypeptide, the second amino acid generally not being Pro.. Removes 5-oxoproline from various penultimate amino acid residues except L-proline. The protein is Pyrrolidone-carboxylate peptidase of Bacillus licheniformis (strain ATCC 14580 / DSM 13 / JCM 2505 / CCUG 7422 / NBRC 12200 / NCIMB 9375 / NCTC 10341 / NRRL NRS-1264 / Gibson 46).